Here is a 188-residue protein sequence, read N- to C-terminus: uncharacterized protein (188 aa).

The first 23 residues, 1 to 23 (MFKGQKTLAALAVSLLFTAPVYA), serve as a signal peptide directing secretion. A disulfide bridge links cysteine 42 with cysteine 81.

Belongs to the fimbrial protein family.

The protein resides in the fimbrium. This is an uncharacterized protein from Escherichia coli (strain K12).